The sequence spans 165 residues: Large ribosomal subunit protein uL11 (165 aa).

It belongs to the universal ribosomal protein uL11 family. Component of the large ribosomal subunit. Mature ribosomes consist of a small (40S) and a large (60S) subunit. The 40S subunit contains about 32 different proteins and 1 molecule of RNA (18S). The 60S subunit contains 45 different proteins and 3 molecules of RNA (25S, 5.8S and 5S).

It is found in the cytoplasm. Its function is as follows. Component of the ribosome, a large ribonucleoprotein complex responsible for the synthesis of proteins in the cell. The small ribosomal subunit (SSU) binds messenger RNAs (mRNAs) and translates the encoded message by selecting cognate aminoacyl-transfer RNA (tRNA) molecules. The large subunit (LSU) contains the ribosomal catalytic site termed the peptidyl transferase center (PTC), which catalyzes the formation of peptide bonds, thereby polymerizing the amino acids delivered by tRNAs into a polypeptide chain. The nascent polypeptides leave the ribosome through a tunnel in the LSU and interact with protein factors that function in enzymatic processing, targeting, and the membrane insertion of nascent chains at the exit of the ribosomal tunnel. The sequence is that of Large ribosomal subunit protein uL11 (RPL12) from Candida albicans (strain SC5314 / ATCC MYA-2876) (Yeast).